Reading from the N-terminus, the 226-residue chain is Cytidylate kinase (226 aa).

11–19 (GPAGAGKST) is an ATP binding site.

This sequence belongs to the cytidylate kinase family. Type 1 subfamily.

It is found in the cytoplasm. It catalyses the reaction CMP + ATP = CDP + ADP. The enzyme catalyses dCMP + ATP = dCDP + ADP. In Pelotomaculum thermopropionicum (strain DSM 13744 / JCM 10971 / SI), this protein is Cytidylate kinase.